A 382-amino-acid polypeptide reads, in one-letter code: Porphobilinogen deaminase, chloroplastic (382 aa).

The N-terminal 62 residues, 1 to 62 (MDIASSSLSQ…KQSSSGFVKA (62 aa)), are a transit peptide targeting the chloroplast. Arg80 and Ser82 together coordinate dipyrromethane. Ser123 is modified (phosphoserine). Residues 156 to 157 (KD), 200 to 206 (TASLRRK), and 223 to 229 (RGNVQTR) each bind dipyrromethane. Asp157 serves as the catalytic Proton donor/acceptor. S-(dipyrrolylmethanemethyl)cysteine is present on Cys316.

It belongs to the HMBS family. In terms of assembly, monomer. Dipyrromethane is required as a cofactor.

It localises to the plastid. The protein localises to the chloroplast. The catalysed reaction is 4 porphobilinogen + H2O = hydroxymethylbilane + 4 NH4(+). It participates in porphyrin-containing compound metabolism; protoporphyrin-IX biosynthesis; coproporphyrinogen-III from 5-aminolevulinate: step 2/4. Its pathway is porphyrin-containing compound metabolism; chlorophyll biosynthesis. Inhibited by NH(3), heavy-metal ions, hydroxylamine and 2-bromoporphobilinogen. Not inhibited by N-ethylmaleimide. Tetrapolymerization of the monopyrrole PBG into the hydroxymethylbilane pre-uroporphyrinogen in several discrete steps. This is Porphobilinogen deaminase, chloroplastic (HEMC) from Arabidopsis thaliana (Mouse-ear cress).